Reading from the N-terminus, the 163-residue chain is Glyoxalase domain-containing protein 5 (163 aa).

One can recognise a VOC domain in the interval 41-161 (HLDHLVLTVR…DDNLIEVSNY (121 aa)).

The protein belongs to the glyoxalase I family.

The polypeptide is Glyoxalase domain-containing protein 5 (glod5) (Danio rerio (Zebrafish)).